We begin with the raw amino-acid sequence, 548 residues long: Chaperonin GroEL (548 aa).

Residues 30-33, lysine 51, 87-91, glycine 415, 479-481, and aspartate 495 each bind ATP; these read TLGP, DGTTT, and NAA. The interval 525-548 is disordered; the sequence is PKEDKTSDASSSPAGGMGGMGGMM. Positions 539-548 are enriched in gly residues; the sequence is GGMGGMGGMM.

It belongs to the chaperonin (HSP60) family. Forms a cylinder of 14 subunits composed of two heptameric rings stacked back-to-back. Interacts with the co-chaperonin GroES.

It is found in the cytoplasm. The catalysed reaction is ATP + H2O + a folded polypeptide = ADP + phosphate + an unfolded polypeptide.. Its function is as follows. Together with its co-chaperonin GroES, plays an essential role in assisting protein folding. The GroEL-GroES system forms a nano-cage that allows encapsulation of the non-native substrate proteins and provides a physical environment optimized to promote and accelerate protein folding. In Buchnera aphidicola subsp. Rhopalosiphum maidis, this protein is Chaperonin GroEL.